The chain runs to 484 residues: Protein nucleotidyltransferase YdiU (484 aa).

ATP-binding residues include G81, G83, R84, K103, D115, G116, R166, and R173. The active-site Proton acceptor is the D244. Mg(2+)-binding residues include N245 and D254. D254 contributes to the ATP binding site.

It belongs to the SELO family. Requires Mg(2+) as cofactor. It depends on Mn(2+) as a cofactor.

It catalyses the reaction L-seryl-[protein] + ATP = 3-O-(5'-adenylyl)-L-seryl-[protein] + diphosphate. The enzyme catalyses L-threonyl-[protein] + ATP = 3-O-(5'-adenylyl)-L-threonyl-[protein] + diphosphate. The catalysed reaction is L-tyrosyl-[protein] + ATP = O-(5'-adenylyl)-L-tyrosyl-[protein] + diphosphate. It carries out the reaction L-histidyl-[protein] + UTP = N(tele)-(5'-uridylyl)-L-histidyl-[protein] + diphosphate. It catalyses the reaction L-seryl-[protein] + UTP = O-(5'-uridylyl)-L-seryl-[protein] + diphosphate. The enzyme catalyses L-tyrosyl-[protein] + UTP = O-(5'-uridylyl)-L-tyrosyl-[protein] + diphosphate. Functionally, nucleotidyltransferase involved in the post-translational modification of proteins. It can catalyze the addition of adenosine monophosphate (AMP) or uridine monophosphate (UMP) to a protein, resulting in modifications known as AMPylation and UMPylation. This chain is Protein nucleotidyltransferase YdiU, found in Shewanella sp. (strain MR-7).